The chain runs to 264 residues: S-adenosylmethionine decarboxylase proenzyme (264 aa).

The Schiff-base intermediate with substrate; via pyruvic acid role is filled by Ser112. A Pyruvic acid (Ser); by autocatalysis modification is found at Ser112. Catalysis depends on His117, which acts as the Proton acceptor; for processing activity. The active-site Proton donor; for catalytic activity is the Cys140.

It belongs to the prokaryotic AdoMetDC family. Type 2 subfamily. Heterooctamer of four alpha and four beta chains arranged as a tetramer of alpha/beta heterodimers. Requires pyruvate as cofactor. Post-translationally, is synthesized initially as an inactive proenzyme. Formation of the active enzyme involves a self-maturation process in which the active site pyruvoyl group is generated from an internal serine residue via an autocatalytic post-translational modification. Two non-identical subunits are generated from the proenzyme in this reaction, and the pyruvate is formed at the N-terminus of the alpha chain, which is derived from the carboxyl end of the proenzyme. The post-translation cleavage follows an unusual pathway, termed non-hydrolytic serinolysis, in which the side chain hydroxyl group of the serine supplies its oxygen atom to form the C-terminus of the beta chain, while the remainder of the serine residue undergoes an oxidative deamination to produce ammonia and the pyruvoyl group blocking the N-terminus of the alpha chain.

The catalysed reaction is S-adenosyl-L-methionine + H(+) = S-adenosyl 3-(methylsulfanyl)propylamine + CO2. Its pathway is amine and polyamine biosynthesis; S-adenosylmethioninamine biosynthesis; S-adenosylmethioninamine from S-adenosyl-L-methionine: step 1/1. In terms of biological role, catalyzes the decarboxylation of S-adenosylmethionine to S-adenosylmethioninamine (dcAdoMet), the propylamine donor required for the synthesis of the polyamines spermine and spermidine from the diamine putrescine. This chain is S-adenosylmethionine decarboxylase proenzyme, found in Cronobacter sakazakii (strain ATCC BAA-894) (Enterobacter sakazakii).